The primary structure comprises 810 residues: Lon protease (810 aa).

Positions 40–233 constitute a Lon N-terminal domain; it reads LIIVPVRGFV…MVAKLLAQRI (194 aa). ATP is bound at residue 385–392; the sequence is GPPGVGKT. The region spanning 621-802 is the Lon proteolytic domain; it reads LSVPGVATGL…DDAMAAAFEG (182 aa). Catalysis depends on residues Ser-708 and Lys-751.

The protein belongs to the peptidase S16 family. Homohexamer. Organized in a ring with a central cavity.

The protein resides in the cytoplasm. It carries out the reaction Hydrolysis of proteins in presence of ATP.. In terms of biological role, ATP-dependent serine protease that mediates the selective degradation of mutant and abnormal proteins as well as certain short-lived regulatory proteins. Required for cellular homeostasis and for survival from DNA damage and developmental changes induced by stress. Degrades polypeptides processively to yield small peptide fragments that are 5 to 10 amino acids long. Binds to DNA in a double-stranded, site-specific manner. The sequence is that of Lon protease from Methylocella silvestris (strain DSM 15510 / CIP 108128 / LMG 27833 / NCIMB 13906 / BL2).